The sequence spans 438 residues: Cyanidin-3-O-glucoside 2-O-glucuronosyltransferase (438 aa).

UDP-alpha-D-glucuronate contacts are provided by residues S264, 315-316 (WV), 333-341 (HCGWSSTME), and 355-358 (QFDQ).

Belongs to the UDP-glycosyltransferase family. Monomer. As to expression, expressed in petals. Not detected in sepals, stems, leaves, tubular corollas and white petals.

The protein resides in the cytoplasm. The catalysed reaction is cyanidin 3-O-beta-D-glucoside + UDP-alpha-D-glucuronate = cyanidin 3-O-(2-O-beta-D-glucuronosyl)-beta-D-glucoside + UDP + H(+). Inhibited by copper, mercury, UDP, UTP and partially by calcium, cadmium, iron and UMP. Not affected by cobalt, magnesium, manganese, zinc, nickel, tin, uridine, sadium malonate and glucose. Involved in the production of glucuronosylated anthocyanins that are the origin of the red coloration of flowers. Can use cyanidin 3-O-6''-O-malonylglucoside, cyanidin 3-O-glucoside and delphinidin 3-O-glucosideas substrates, but not pelargonidin 3-O-glucoside, cyanidin 3-O-3'',6''-O-dimalonylglucoside, pelargonidin 3,5-O-diglucoside, pelargonidin 3-O-6''-O-malonylglucoside-5-O-glucoside, quercetin 3-O-glucoside, quercetin 3-O-6''-O-malonylglucoside, daidzin, genistin,7-O-6''-O-malonylglucosides of daidzein and genistein, cyanidin, quercetin, daidzein, genistein p-Nitrophenyl beta-D-glucopyranoside, beta-estradiol, 17alpha-estradiol, 1-naphthol, 2-naphthol, 4-methylumbelliferone, and p-nitrophenol. Highly specific for UDP-glucuronate (UDP-GlcUA). Arg-25 is decisive with respect to UDP-sugar specificity. This is Cyanidin-3-O-glucoside 2-O-glucuronosyltransferase (UGAT) from Bellis perennis (English daisy).